Here is a 416-residue protein sequence, read N- to C-terminus: UDP-N-acetylmuramoylalanine--D-glutamate ligase (416 aa).

104-110 provides a ligand contact to ATP; it reads GSNGKST.

This sequence belongs to the MurCDEF family.

The protein resides in the cytoplasm. The catalysed reaction is UDP-N-acetyl-alpha-D-muramoyl-L-alanine + D-glutamate + ATP = UDP-N-acetyl-alpha-D-muramoyl-L-alanyl-D-glutamate + ADP + phosphate + H(+). The protein operates within cell wall biogenesis; peptidoglycan biosynthesis. Functionally, cell wall formation. Catalyzes the addition of glutamate to the nucleotide precursor UDP-N-acetylmuramoyl-L-alanine (UMA). The sequence is that of UDP-N-acetylmuramoylalanine--D-glutamate ligase from Francisella tularensis subsp. holarctica (strain FTNF002-00 / FTA).